Here is a 159-residue protein sequence, read N- to C-terminus: Probable chemoreceptor glutamine deamidase CheD 2 (159 aa).

It belongs to the CheD family.

The catalysed reaction is L-glutaminyl-[protein] + H2O = L-glutamyl-[protein] + NH4(+). Functionally, probably deamidates glutamine residues to glutamate on methyl-accepting chemotaxis receptors (MCPs), playing an important role in chemotaxis. The protein is Probable chemoreceptor glutamine deamidase CheD 2 of Anaeromyxobacter dehalogenans (strain 2CP-C).